A 116-amino-acid polypeptide reads, in one-letter code: Large ribosomal subunit protein bL20c (116 aa).

It belongs to the bacterial ribosomal protein bL20 family.

The protein localises to the plastid. The protein resides in the chloroplast. Binds directly to 23S ribosomal RNA and is necessary for the in vitro assembly process of the 50S ribosomal subunit. It is not involved in the protein synthesizing functions of that subunit. The protein is Large ribosomal subunit protein bL20c of Ipomoea purpurea (Common morning glory).